The sequence spans 49 residues: Putative exported peptide YydF (49 aa).

Functionally, suggested to be the precursor for an exported, modified peptide that has antimicrobial and/or signaling properties. Synthesis requires YydG and YydH; the peptide is proposed to be exported by the YydIJ transporter. In the absence of the transporter, the modified peptide activates the LiaRS two-component regulatory system, possibly by eliciting cell envelope stress. This activation can occur in trans in cocultured cells lacking either the transporter or the whole operon. This is Putative exported peptide YydF (yydF) from Bacillus subtilis (strain 168).